A 360-amino-acid chain; its full sequence is UDP-N-acetylglucosamine--N-acetylmuramyl-(pentapeptide) pyrophosphoryl-undecaprenol N-acetylglucosamine transferase (360 aa).

Residues Thr15–Gly17, Asn128, Arg164, Ser192, Ile247, and Gln292 contribute to the UDP-N-acetyl-alpha-D-glucosamine site.

The protein belongs to the glycosyltransferase 28 family. MurG subfamily.

Its subcellular location is the cell inner membrane. It catalyses the reaction di-trans,octa-cis-undecaprenyl diphospho-N-acetyl-alpha-D-muramoyl-L-alanyl-D-glutamyl-meso-2,6-diaminopimeloyl-D-alanyl-D-alanine + UDP-N-acetyl-alpha-D-glucosamine = di-trans,octa-cis-undecaprenyl diphospho-[N-acetyl-alpha-D-glucosaminyl-(1-&gt;4)]-N-acetyl-alpha-D-muramoyl-L-alanyl-D-glutamyl-meso-2,6-diaminopimeloyl-D-alanyl-D-alanine + UDP + H(+). It functions in the pathway cell wall biogenesis; peptidoglycan biosynthesis. Functionally, cell wall formation. Catalyzes the transfer of a GlcNAc subunit on undecaprenyl-pyrophosphoryl-MurNAc-pentapeptide (lipid intermediate I) to form undecaprenyl-pyrophosphoryl-MurNAc-(pentapeptide)GlcNAc (lipid intermediate II). This is UDP-N-acetylglucosamine--N-acetylmuramyl-(pentapeptide) pyrophosphoryl-undecaprenol N-acetylglucosamine transferase from Blochmanniella floridana.